Here is a 525-residue protein sequence, read N- to C-terminus: GMP synthase [glutamine-hydrolyzing] (525 aa).

Residues 9-207 (RILILDFGSQ…VRDICQCEAL (199 aa)) enclose the Glutamine amidotransferase type-1 domain. Cysteine 86 serves as the catalytic Nucleophile. Residues histidine 181 and glutamate 183 contribute to the active site. The GMPS ATP-PPase domain occupies 208-400 (WTPAKIIDDA…LGLPYDMLYR (193 aa)). 235 to 241 (SGGVDSS) contributes to the ATP binding site.

As to quaternary structure, homodimer.

The enzyme catalyses XMP + L-glutamine + ATP + H2O = GMP + L-glutamate + AMP + diphosphate + 2 H(+). It participates in purine metabolism; GMP biosynthesis; GMP from XMP (L-Gln route): step 1/1. Its function is as follows. Catalyzes the synthesis of GMP from XMP. This Salmonella arizonae (strain ATCC BAA-731 / CDC346-86 / RSK2980) protein is GMP synthase [glutamine-hydrolyzing].